The chain runs to 437 residues: MGNLVAIVGRPNVGKSTLFNRLTKTRQAIVNDEAGTTRDRQYGKSEWLGREFSVVDTGGWVVNSDDIFEEEIRKQVLMAVDEADVILFVVDVTNGVTDLDMQVAAILRRAKSPVIMVANKTDNHELRYNAPEFYRLGLGDPYCISAISGSGTGDLMDLIVSKFKKESDEILDEDIPRFAVVGRPNAGKSSIVNAFIGEERNIVTEIAGTTRDSIYTRYNKFGFDFYLVDTAGIRKKNKVNEDLEYYSVVRSIRAIEGADVCILMVDATRGIESQDLNIFSLIQKNSKGLVVVVNKWDLVENKTDKVMKTFEEAIRSRFAPFVDFPIVFASALTKQRILKVLEEARKVYENRMIKIPTARLNEEMLPLIEAYPPPATKGKYIKIKYVTQLPNTQVPSFVFFANLPQYVKEPYRRFLENKMREKWDLSGTPINIYIRQK.

EngA-type G domains lie at 3 to 167 and 176 to 352; these read NLVA…KKES and PRFA…ENRM. GTP-binding positions include 9 to 16, 56 to 60, 119 to 122, 182 to 189, 229 to 233, and 294 to 297; these read GRPNVGKS, DTGGW, NKTD, GRPNAGKS, DTAGI, and NKWD. A KH-like domain is found at 353 to 437; sequence IKIPTARLNE…TPINIYIRQK (85 aa).

Belongs to the TRAFAC class TrmE-Era-EngA-EngB-Septin-like GTPase superfamily. EngA (Der) GTPase family. In terms of assembly, associates with the 50S ribosomal subunit.

In terms of biological role, GTPase that plays an essential role in the late steps of ribosome biogenesis. This Bacteroides fragilis (strain ATCC 25285 / DSM 2151 / CCUG 4856 / JCM 11019 / LMG 10263 / NCTC 9343 / Onslow / VPI 2553 / EN-2) protein is GTPase Der.